The following is a 216-amino-acid chain: Large ribosomal subunit protein uL3 (216 aa).

Q153 carries the post-translational modification N5-methylglutamine.

Belongs to the universal ribosomal protein uL3 family. As to quaternary structure, part of the 50S ribosomal subunit. Forms a cluster with proteins L14 and L19. Post-translationally, methylated by PrmB.

Its function is as follows. One of the primary rRNA binding proteins, it binds directly near the 3'-end of the 23S rRNA, where it nucleates assembly of the 50S subunit. The polypeptide is Large ribosomal subunit protein uL3 (Burkholderia multivorans (strain ATCC 17616 / 249)).